A 327-amino-acid chain; its full sequence is Solute-binding protein SPO1773 (327 aa).

A signal peptide spans 1-26; it reads MTISFKGLARGVACAALVLAALPAAA. Residues 39–41, Arg150, 170–172, and Asp211 each bind 3-hydroxybenzoate; these read HTW and RIT.

This sequence belongs to the bacterial solute-binding protein 7 family. The complex is comprised of an extracytoplasmic solute-binding protein and a heteromeric permease formed by two transmembrane proteins.

It is found in the periplasm. In terms of biological role, solute-binding protein that binds 3,4-dihydroxybenzoate and 3-hydroxybenzoate (in vitro). Probably part of a tripartite ATP-independent periplasmic (TRAP) transport system that mediates solute transport into the cytoplasm. This Ruegeria pomeroyi (strain ATCC 700808 / DSM 15171 / DSS-3) (Silicibacter pomeroyi) protein is Solute-binding protein SPO1773.